The chain runs to 67 residues: UPF0434 protein Bcep1808_2639 (67 aa).

Belongs to the UPF0434 family.

In Burkholderia vietnamiensis (strain G4 / LMG 22486) (Burkholderia cepacia (strain R1808)), this protein is UPF0434 protein Bcep1808_2639.